Consider the following 130-residue polypeptide: uncharacterized protein (130 aa).

2 stretches are compositionally biased toward polar residues: residues 1 to 27 (MEIL…QPSQ) and 36 to 46 (QAENQETAKNG). 2 disordered regions span residues 1–46 (MEIL…AKNG) and 103–130 (VSAQ…ELDL). A coiled-coil region spans residues 27 to 51 (QDAHEKARQQAENQETAKNGMISQI).

It belongs to the PDCD5 family.

This is an uncharacterized protein from Caenorhabditis elegans.